The following is a 1061-amino-acid chain: E3 SUMO-protein ligase ZNF451 (1061 aa).

The interval 1-38 (MGDPGSEIIESVPPAGPEASESTTDENEDDIQFVSEGP) is disordered. The tract at residues 1–246 (MGDPGSEIIE…TDDGHNNNLL (246 aa)) is sufficient for E3 SUMO-protein ligase activity. Residues 1–344 (MGDPGSEIIE…RVHCRNAGPV (344 aa)) form an important for interaction with SUMO1 and SUMO2 region. Residues 30–37 (DIQFVSEG) form an interaction with SUMO2 1 region. The PLRP signature appears at 38–41 (PLRP). The interval 42 to 50 (VLEYIDLVS) is interaction with SUMO2 2. Residues Lys-75, Lys-77, Lys-106, Ile-121, Ala-130, Leu-138, Lys-139, Lys-144, and Lys-153 each participate in a glycyl lysine isopeptide (Lys-Gly) (interchain with G-Cter in SUMO2) cross-link. Position 155 is a phosphoserine (Ser-155). Residue Arg-158 is modified to Omega-N-methylarginine. Residues Val-164 and Lys-167 each participate in a glycyl lysine isopeptide (Lys-Gly) (interchain with G-Cter in SUMO2) cross-link. The interval 168–525 (PILCPIMHCN…HMSRIHGGAH (358 aa)) is important for interaction with SMAD4. The C2H2-type 1 zinc-finger motif lies at 169-195 (ILCPIMHCNKEFDNGHLLLGHLKRFDH). Glycyl lysine isopeptide (Lys-Gly) (interchain with G-Cter in SUMO2) cross-links involve residues Gln-226, Gly-240, Pro-247, Ser-263, Lys-270, Lys-275, Lys-283, Asp-286, Lys-288, Pro-293, Lys-301, and Lys-309. The C2H2-type 2 zinc finger occupies 253-277 (FACPNCFLLFSRKEECSKHMSGKNH). The C2H2-type 3 zinc finger occupies 315–337 (VKCVACHKTLRSHMELTAHFRVH). Residue Lys-357 forms a Glycyl lysine isopeptide (Lys-Gly) (interchain with G-Cter in SUMO2) linkage. The segment at 362-386 (GYCPDCNQVFVDETSTQNHKQNSGH) adopts a C2H2-type 4 zinc-finger fold. Lys-423 is covalently cross-linked (Glycyl lysine isopeptide (Lys-Gly) (interchain with G-Cter in SUMO2)). At Ser-432 the chain carries Phosphoserine. Glycyl lysine isopeptide (Lys-Gly) (interchain with G-Cter in SUMO2) cross-links involve residues Lys-434, Lys-446, Lys-452, Lys-454, Lys-464, Phe-473, Val-490, Cys-500, Lys-505, Asp-508, Gly-522, Trp-532, Lys-543, and Lys-585. The C2H2-type 5 zinc-finger motif lies at 498-521 (YKCVVCGKVCDDSGVIRLHMSRIH). A C2H2-type 6 zinc finger spans residues 531-554 (FWCRTCKKELTRKDTIMAHVTEFH). The C2H2-type 7; atypical zinc finger occupies 606–631 (WQCRICEDMFDSQEYVKQHCMSLASH). Glycyl lysine isopeptide (Lys-Gly) (interchain with G-Cter in SUMO2) cross-links involve residues Lys-632, Lys-647, and Lys-664. The C2H2-type 8 zinc-finger motif lies at 636–659 (YSCAHCRKPFHKIETLYRHCQDEH). The segment at 667–690 (YFCGLCDLIFNVEEAFLSHYEEHH) adopts a C2H2-type 9 zinc-finger fold. A Glycyl lysine isopeptide (Lys-Gly) (interchain with G-Cter in SUMO1); alternate cross-link involves residue Lys-706. A Glycyl lysine isopeptide (Lys-Gly) (interchain with G-Cter in SUMO2); alternate cross-link involves residue Lys-706. Glycyl lysine isopeptide (Lys-Gly) (interchain with G-Cter in SUMO2) cross-links involve residues Lys-731 and Lys-748. The C2H2-type 10 zinc finger occupies 753–776 (FRCSLCSATAQNLTDMNTHIHQVH). Residues Lys-777, Lys-779, Lys-790, Lys-817, Lys-827, Lys-832, Lys-843, Lys-845, Lys-852, Lys-951, Lys-992, and Lys-993 each participate in a glycyl lysine isopeptide (Lys-Gly) (interchain with G-Cter in SUMO2) cross-link. A C2H2-type 11 zinc finger spans residues 789 to 812 (IKCGTCTKAFHDPESAQQHFHRKH). The important for ubiquitin binding stretch occupies residues 1050-1061 (LEEAIRRSLEEM).

The protein belongs to the krueppel C2H2-type zinc-finger protein family. In terms of assembly, homooligomer. Interacts (via N-terminal region) with SUMO1. Interacts (via N-terminal region) with SUMO2. Interacts simultaneously with two SUMO2 chains. Identified in a complex with SUMO2 and UBE2I/UBC9, where one ZNF451 interacts with one UBE2I/UBC9 and two SUMO2 chains, one bound to the UBE2I/UBC9 active site and the other to another region of the same UBE2I/UBC9 molecule. Interacts (via C-terminus) with ubiquitin. Interacts (via N-terminal zinc-finger domains) with SMAD4 (via MH2 domain). Interacts with SMAD2 and SMAD3. Identified in a complex that contains at least ZNF451, SMAD2, SMAD3 and SMAD4. Interacts with EP300. Inhibits interaction between EP300 and the SMAD4 complex. Interacts with SIMC1. Sumoylated. Predominantly sumoylated on the N-terminal region that is important for interaction with SUMO1 and SUMO2. Sumoylation is important for localization in nuclear granules; desumoylation leads to diffuse nucleoplasmic location. Autosumoylated (in vitro). Sumoylation enhances E3 SUMO-protein ligase activity.

The protein localises to the nucleus. It localises to the PML body. Its subcellular location is the nucleoplasm. It functions in the pathway protein modification; protein sumoylation. Its function is as follows. E3 SUMO-protein ligase; has a preference for SUMO2 and SUMO3 and facilitates UBE2I/UBC9-mediated sumoylation of target proteins. Plays a role in protein SUMO2 modification in response to stress caused by DNA damage and by proteasome inhibitors (in vitro). Required for MCM4 sumoylation. Has no activity with SUMO1. Preferentially transfers an additional SUMO2 chain onto the SUMO2 consensus site 'Lys-11'. Negatively regulates transcriptional activation mediated by the SMAD4 complex in response to TGF-beta signaling. Inhibits EP300-mediated acetylation of histone H3 at 'Lys-9'. Plays a role in regulating the transcription of AR targets. In Homo sapiens (Human), this protein is E3 SUMO-protein ligase ZNF451 (ZNF451).